A 508-amino-acid polypeptide reads, in one-letter code: 2'-5'-oligoadenylate synthase-like protein 2 (508 aa).

Residue serine 69 participates in ATP binding. The Mg(2+) site is built by aspartate 81, aspartate 83, and aspartate 154. ATP-binding residues include arginine 213 and lysine 216. Residues 435 to 473 (ILVFVKYPGGQSKPFTIDPDDTILDLKEKIEDAGGPCAE) form the Ubiquitin-like domain.

The protein belongs to the 2-5A synthase family. It depends on Mg(2+) as a cofactor. In terms of tissue distribution, strongly expressed in spleen dendritic cells, whereas, in bone marrow-derived dendritic cells, the amount increases during the maturation process. Expressed in many organs, the highest levels being in thymus, lung, and bone marrow.

It carries out the reaction 3 ATP = 5'-triphosphoadenylyl-(2'-&gt;5')-adenylyl-(2'-&gt;5')-adenosine + 2 diphosphate. Produced as a latent enzyme which is activated by dsRNA generated during the course of viral infection. The dsRNA activator must be at least 15 nucleotides long, and no modification of the 2'-hydroxyl group is tolerated. ssRNA or dsDNA do not act as activators. Its function is as follows. Interferon-induced, dsRNA-activated antiviral enzyme which plays a critical role in cellular innate antiviral response. Synthesizes oligomers of 2'-5'-oligoadenylates (2-5A) from ATP which then bind to the inactive monomeric form of ribonuclease L (RNase L) leading to its dimerization and subsequent activation. Activation of RNase L leads to degradation of cellular as well as viral RNA, resulting in the inhibition of protein synthesis, thus terminating viral replication. Can mediate the antiviral effect via the classical RNase L-dependent pathway or an alternative antiviral pathway independent of RNase L. The polypeptide is 2'-5'-oligoadenylate synthase-like protein 2 (Oasl2) (Mus musculus (Mouse)).